Here is a 617-residue protein sequence, read N- to C-terminus: MEVKNFAVWDYVVFAALFIISSGIGVFYAIKERKKATSREFLVGGRQMSFGPVALSLTASFMSAVTVLGTPADVYRFGASFVLFFITYGLVIILTSELFLPVFYRSGITSTYEYLQLRFNKPVRYAATVIYIVQTILYTGVVVYAPALALNQVTGFDLWGSVFATGIVCTFYCTLGGLKAVVWTDAFQMVVMIVGFLTVLIQGSTYAGGLHNVLEQAENGSRLNIFDFDIDPLRRHTFWTISVGGTFTWLGIYGVNQSTIQRCISCKTEKHAKLALYFNLLGLWIILLCAVFSGLTMYAHFKDCDPWTSGIISAPDQLMPYFVMELFSTMPGLPGLFVACAFSGTLSTVAASINALATVTFEDFVKSCFPRLSDKLSTWISKGLCLLFGVICTSTAVAASLMGGVIQAALSIHGMCGGPMLGLFSLGILFPFVNWKGALAGLLTGILLSFWVAIGAFIYPAPASKTWPLPLSTDQCGLSNVTESVPPVLSSRPAIAETWYALSYLHYSTVGCLGCIAAGVIISFLTGLQKGKDIPPLLIRPVCNLFCFWSKKYKTLCWCGVQHDSGTEQENLENDSTWKQGAESVLQNGLKQESLVPGYDPKDKSYDNMALEKITHF.

Residues 1 to 5 (MEVKN) are Extracellular-facing. The chain crosses the membrane as a helical span at residues 6–26 (FAVWDYVVFAALFIISSGIGV). Over 27–47 (FYAIKERKKATSREFLVGGRQ) the chain is Cytoplasmic. A helical transmembrane segment spans residues 48-68 (MSFGPVALSLTASFMSAVTVL). Residues 69–80 (GTPADVYRFGAS) are Extracellular-facing. Residues 81–101 (FVLFFITYGLVIILTSELFLP) traverse the membrane as a helical segment. The Cytoplasmic segment spans residues 102–128 (VFYRSGITSTYEYLQLRFNKPVRYAAT). A helical membrane pass occupies residues 129 to 149 (VIYIVQTILYTGVVVYAPALA). Over 150–157 (LNQVTGFD) the chain is Extracellular. A helical membrane pass occupies residues 158 to 178 (LWGSVFATGIVCTFYCTLGGL). Topologically, residues 179 to 180 (KA) are cytoplasmic. The helical transmembrane segment at 181-201 (VVWTDAFQMVVMIVGFLTVLI) threads the bilayer. The Extracellular portion of the chain corresponds to 202–235 (QGSTYAGGLHNVLEQAENGSRLNIFDFDIDPLRR). An N-linked (GlcNAc...) asparagine glycan is attached at Asn219. The helical transmembrane segment at 236 to 256 (HTFWTISVGGTFTWLGIYGVN) threads the bilayer. The Cytoplasmic segment spans residues 257–273 (QSTIQRCISCKTEKHAK). A helical transmembrane segment spans residues 274-294 (LALYFNLLGLWIILLCAVFSG). At 295–334 (LTMYAHFKDCDPWTSGIISAPDQLMPYFVMELFSTMPGLP) the chain is on the extracellular side. The chain crosses the membrane as a helical span at residues 335 to 357 (GLFVACAFSGTLSTVAASINALA). The Cytoplasmic portion of the chain corresponds to 358-385 (TVTFEDFVKSCFPRLSDKLSTWISKGLC). Residues 386-406 (LLFGVICTSTAVAASLMGGVI) form a helical membrane-spanning segment. Residues 407–411 (QAALS) are Extracellular-facing. A helical transmembrane segment spans residues 412-432 (IHGMCGGPMLGLFSLGILFPF). The Cytoplasmic segment spans residues 433–437 (VNWKG). Residues 438–458 (ALAGLLTGILLSFWVAIGAFI) form a helical membrane-spanning segment. The Extracellular portion of the chain corresponds to 459 to 507 (YPAPASKTWPLPLSTDQCGLSNVTESVPPVLSSRPAIAETWYALSYLHY). An N-linked (GlcNAc...) asparagine glycan is attached at Asn480. A helical transmembrane segment spans residues 508–528 (STVGCLGCIAAGVIISFLTGL). Residues 529 to 617 (QKGKDIPPLL…NMALEKITHF (89 aa)) lie on the Cytoplasmic side of the membrane.

This sequence belongs to the sodium:solute symporter (SSF) (TC 2.A.21) family.

The protein localises to the apical cell membrane. It carries out the reaction (S)-lactate(out) + Na(+)(out) = (S)-lactate(in) + Na(+)(in). The enzyme catalyses nicotinate(out) + Na(+)(out) = nicotinate(in) + Na(+)(in). It catalyses the reaction pyruvate(out) + Na(+)(out) = pyruvate(in) + Na(+)(in). The catalysed reaction is propanoate(out) + Na(+)(out) = propanoate(in) + Na(+)(in). It carries out the reaction butanoate(out) + Na(+)(out) = butanoate(in) + Na(+)(in). The enzyme catalyses acetoacetate(out) + Na(+)(out) = acetoacetate(in) + Na(+)(in). In terms of biological role, acts as an electroneutral and low-affinity sodium (Na(+))-dependent sodium-coupled solute transporter. Catalyzes the transport across the plasma membrane of many monocarboxylates such as lactate, pyruvate, nicotinate, propionate, butyrate and beta-D-hydroxybutyrate. May be responsible for the first step of reabsorption of monocarboxylates from the lumen of the proximal tubule of the kidney and the small intestine. May play also a role in monocarboxylates transport in the retina. Mediates electroneutral uptake of lactate, with a stoichiometry of 2 Na(+) for each lactate. The protein is Sodium-coupled monocarboxylate transporter 2 (SLC5A12) of Bos taurus (Bovine).